Reading from the N-terminus, the 208-residue chain is Ribosomal RNA large subunit methyltransferase E (208 aa).

S-adenosyl-L-methionine contacts are provided by Gly-63, Trp-65, Asp-83, Asp-99, and Asp-124. Lys-164 (proton acceptor) is an active-site residue.

This sequence belongs to the class I-like SAM-binding methyltransferase superfamily. RNA methyltransferase RlmE family.

The protein resides in the cytoplasm. The catalysed reaction is uridine(2552) in 23S rRNA + S-adenosyl-L-methionine = 2'-O-methyluridine(2552) in 23S rRNA + S-adenosyl-L-homocysteine + H(+). Specifically methylates the uridine in position 2552 of 23S rRNA at the 2'-O position of the ribose in the fully assembled 50S ribosomal subunit. This is Ribosomal RNA large subunit methyltransferase E from Hamiltonella defensa subsp. Acyrthosiphon pisum (strain 5AT).